The sequence spans 227 residues: Ribonuclease 3 (227 aa).

Residues Y5–G127 enclose the RNase III domain. Residue E40 participates in Mg(2+) binding. The active site involves D44. Mg(2+)-binding residues include D113 and E116. Residue E116 is part of the active site. One can recognise a DRBM domain in the interval D154–K224.

Belongs to the ribonuclease III family. In terms of assembly, homodimer. It depends on Mg(2+) as a cofactor.

It is found in the cytoplasm. The catalysed reaction is Endonucleolytic cleavage to 5'-phosphomonoester.. Its function is as follows. Digests double-stranded RNA. Involved in the processing of primary rRNA transcript to yield the immediate precursors to the large and small rRNAs (23S and 16S). Processes some mRNAs, and tRNAs when they are encoded in the rRNA operon. Processes pre-crRNA and tracrRNA of type II CRISPR loci if present in the organism. The chain is Ribonuclease 3 from Marinomonas sp. (strain MWYL1).